The chain runs to 434 residues: Probable glucuronosyltransferase Os02g0520750 (434 aa).

Topologically, residues 1 to 10 (MVGARAGRVP) are cytoplasmic. A helical; Signal-anchor for type II membrane protein membrane pass occupies residues 11–31 (AAAAAAAAVLIVAACVFSSLA). Over 32 to 434 (GAAAAAEVVG…GPVADLKPWK (403 aa)) the chain is Lumenal. Asn160 and Asn421 each carry an N-linked (GlcNAc...) asparagine glycan.

Belongs to the glycosyltransferase 47 family.

The protein localises to the golgi apparatus membrane. Its function is as follows. Involved in the synthesis of glucuronoxylan hemicellulose in secondary cell walls. In Oryza sativa subsp. japonica (Rice), this protein is Probable glucuronosyltransferase Os02g0520750.